A 697-amino-acid chain; its full sequence is UBA domain-containing protein 7 (697 aa).

Positions 1-94 are disordered; sequence MDDLLDFNFY…STPKSSNYDP (94 aa). A compositionally biased stretch (low complexity) spans 13-32; it reads STPSNQNNYSNNNSRTPSYS. Basic and acidic residues predominate over residues 62-77; it reads KKTDNKISLKELERQK. The span at 81–92 shows a compositional bias: polar residues; that stretch reads PDSNSTPKSSNY. The UBA domain occupies 181 to 221; the sequence is KLSSNEMYEKLRDLGFSDDQSRLALENSGSLEDAIEYILEK. The disordered stretch occupies residues 306-346; sequence PEILPKTPIPKRKPHKVPMNEKVSEDRITTNQSRSGNDESS. A compositionally biased stretch (basic and acidic residues) spans 323–333; the sequence is PMNEKVSEDRI. Residues 334–345 are compositionally biased toward polar residues; that stretch reads TTNQSRSGNDES. The TPR repeat unit spans residues 412–445; that stretch reads VEEQQSTGNELFRKGDFSQAIEEFTNSLSQLPAK. Residues 547–573 are disordered; that stretch reads ISSHSSESHSKRTTQQPKSTPNHTNIK. Over residues 559–573 the composition is skewed to polar residues; it reads TTQQPKSTPNHTNIK. The J domain maps to 633-696; that stretch reads CRWQKVSLSE…AWELFKQQND (64 aa).

This Schizosaccharomyces pombe (strain 972 / ATCC 24843) (Fission yeast) protein is UBA domain-containing protein 7 (ucp7).